The primary structure comprises 383 residues: Omega-6 fatty acid desaturase, endoplasmic reticulum isozyme 2 (383 aa).

The next 3 membrane-spanning stretches (helical) occupy residues 61 to 81, 85 to 105, and 117 to 137; these read TIAFCLYYVATHYFHLLPGPL, GMAIYWAVQGCILTGVWVIAH, and LLDDIVGLILHSALLVPYFSW. The Histidine box-1 signature appears at 105–109; the sequence is HECGH. A Histidine box-2 motif is present at residues 141–145; it reads HRRHH. The next 3 membrane-spanning stretches (helical) occupy residues 179–199, 225–245, and 249–269; these read VLTLAVTLTLGWPLYLALNVS, IYISDAGVLAVVYGLFRLAMA, and AWVVCVYGVPLLVVNGFLVLI. The short motif at 315-319 is the Histidine box-3 element; it reads HVAHH.

This sequence belongs to the fatty acid desaturase type 1 family.

The protein localises to the endoplasmic reticulum membrane. The protein operates within lipid metabolism; polyunsaturated fatty acid biosynthesis. Its function is as follows. ER (microsomal) omega-6 fatty acid desaturase introduces the second double bond in the biosynthesis of 18:3 fatty acids, important constituents of plant membranes. It is thought to use cytochrome b5 as an electron donor and to act on fatty acids esterified to phosphatidylcholine and, possibly, other phospholipids. This Glycine max (Soybean) protein is Omega-6 fatty acid desaturase, endoplasmic reticulum isozyme 2 (FAD2-2).